A 481-amino-acid polypeptide reads, in one-letter code: UDP-glycosyltransferase 88F3 (481 aa).

UDP-alpha-D-glucose contacts are provided by residues Ser-288, Trp-357–Ala-358, His-375–Glu-383, and Tyr-397–Gln-400.

This sequence belongs to the UDP-glycosyltransferase family.

Glycosyltransferase that may possess chalcone and dihydrochalcone 2'-O-glucosyltransferase activity. The polypeptide is UDP-glycosyltransferase 88F3 (Pyrus communis (Pear)).